The primary structure comprises 88 residues: Kunitz-type U15-theraphotoxin-Hs1d (88 aa).

The first 27 residues, 1–27, serve as a signal peptide directing secretion; that stretch reads MGTARFLSAVLLLSVLLMVTFPALLSA. A propeptide spanning residues 28–33 is cleaved from the precursor; that stretch reads EYHDGR. The region spanning 37–85 is the BPTI/Kunitz inhibitor domain; it reads CSLPSDSGDCLRFFEMWYFDGTTCTKFVYGGYGGNGNRFPTEKACMKRC. Disulfide bonds link cysteine 37–cysteine 85 and cysteine 60–cysteine 81.

This sequence belongs to the venom Kunitz-type family. 03 (sub-Kunitz) subfamily. Expressed by the venom gland.

It localises to the secreted. Serine protease inhibitor that inhibits trypsin at a molar ratio of 1:1. This chain is Kunitz-type U15-theraphotoxin-Hs1d, found in Cyriopagopus schmidti (Chinese bird spider).